A 58-amino-acid chain; its full sequence is Large ribosomal subunit protein bL32 (58 aa).

Positions 1-15 (MAVPKKKTSKAKRNQ) are enriched in basic residues. The interval 1–23 (MAVPKKKTSKAKRNQRSATWKGK) is disordered.

Belongs to the bacterial ribosomal protein bL32 family.

The sequence is that of Large ribosomal subunit protein bL32 from Synechococcus sp. (strain CC9902).